Here is a 201-residue protein sequence, read N- to C-terminus: Cytochrome c biogenesis ATP-binding export protein CcmA (201 aa).

In terms of domain architecture, ABC transporter spans 3–200; that stretch reads LIAENLGGER…EGAELRMGVA (198 aa). 35-42 contributes to the ATP binding site; sequence GPNGSGKS.

This sequence belongs to the ABC transporter superfamily. CcmA exporter (TC 3.A.1.107) family. As to quaternary structure, the complex is composed of two ATP-binding proteins (CcmA) and two transmembrane proteins (CcmB).

It localises to the cell inner membrane. It catalyses the reaction heme b(in) + ATP + H2O = heme b(out) + ADP + phosphate + H(+). Part of the ABC transporter complex CcmAB involved in the biogenesis of c-type cytochromes; once thought to export heme, this seems not to be the case, but its exact role is uncertain. Responsible for energy coupling to the transport system. In Mesorhizobium japonicum (strain LMG 29417 / CECT 9101 / MAFF 303099) (Mesorhizobium loti (strain MAFF 303099)), this protein is Cytochrome c biogenesis ATP-binding export protein CcmA.